We begin with the raw amino-acid sequence, 385 residues long: MGQPYAWRLLSRVSSFRRASVILQHLRMSMHTEAAEVLLERRGCGGVITLNRPKFLNALSLNMIRQIYPQLKTWEQDPDTFLIIIKGAGGKAFCAGGDIKALSEAKKARQNLTQDLFREEYILNNAIASCQKPYVALIDGITMGGGVGLSVHGQFRVATERSLFAMPETGIGLFPDVGGGYFLPRLQGKLGYFLALTGYRLKGRDVHRAGIATHFVDSEKLRVLEEELLALKSPSAEDVAGVLESYHAKSKMDQDKSIIFEEHMDKINSCFSANTVEQIIENLRQDGSPFAIEQMKVINKMSPTSLKITLRQLMEGSSKTLQEVLIMEYRITQACMEGHDFHEGVRAVLIDKDQTPKWKPANLKDVTDEDLNSYFKSLGSSDLKF.

A mitochondrion-targeting transit peptide spans 1–32 (MGQPYAWRLLSRVSSFRRASVILQHLRMSMHT). 3 positions are modified to N6-acetyllysine; alternate: Lys-54, Lys-91, and Lys-100. Lys-54, Lys-91, and Lys-100 each carry N6-succinyllysine; alternate. Glu-120, Gly-145, Glu-168, and Asp-176 together coordinate substrate. Lys-220 carries the N6-acetyllysine; alternate modification. Lys-220 carries the post-translational modification N6-succinyllysine; alternate. Ser-233 is subject to Phosphoserine. Residues Lys-249 and Lys-256 each carry the N6-succinyllysine modification. Lys-296 is subject to N6-acetyllysine; alternate. Lys-296 carries the N6-succinyllysine; alternate modification. N6-succinyllysine is present on Lys-300. Lys-352 is subject to N6-acetyllysine; alternate. The residue at position 352 (Lys-352) is an N6-succinyllysine; alternate. Lys-359 and Lys-364 each carry N6-acetyllysine. Lys-376 bears the N6-succinyllysine mark.

It belongs to the enoyl-CoA hydratase/isomerase family.

It is found in the mitochondrion. It carries out the reaction 3-hydroxy-2-methylpropanoyl-CoA + H2O = 3-hydroxy-2-methylpropanoate + CoA + H(+). It functions in the pathway amino-acid degradation; L-valine degradation. Hydrolyzes 3-hydroxyisobutyryl-CoA (HIBYL-CoA), a saline catabolite. Has high activity toward isobutyryl-CoA. Could be an isobutyryl-CoA dehydrogenase that functions in valine catabolism. Also hydrolyzes 3-hydroxypropanoyl-CoA. The protein is 3-hydroxyisobutyryl-CoA hydrolase, mitochondrial (Hibch) of Mus musculus (Mouse).